A 332-amino-acid polypeptide reads, in one-letter code: uncharacterized protein (332 aa).

2 stretches are compositionally biased toward acidic residues: residues 290-314 (EDIDDIDDSDESDDSDDSEDSDSFG) and 323-332 (EDSEDSDNSE). The segment at 290 to 332 (EDIDDIDDSDESDDSDDSEDSDSFGDSDSSGNSEDSEDSDNSE) is disordered.

Belongs to the mimivirus L17x/L18x family.

This is an uncharacterized protein from Acanthamoeba polyphaga mimivirus (APMV).